Consider the following 524-residue polypeptide: 5'-AMP-activated protein kinase subunit gamma-2 (524 aa).

A disordered region spans residues 1–178; sequence MPLLDGDLEG…TRPPLASPTH (178 aa). Residues Ser-21, Ser-27, Ser-29, Ser-46, Ser-94, Ser-99, Ser-117, and Ser-118 each carry the phosphoserine modification. Over residues 112–123 the composition is skewed to low complexity; sequence TSGLSSSPSTPT. Residue Thr-121 is modified to Phosphothreonine. Over residues 135 to 145 the composition is skewed to basic and acidic residues; that stretch reads SYKHEPERLEN. The segment covering 148–168 has biased composition (polar residues); the sequence is YASSSPPDTGQRFCPSSFQSP. The residue at position 152 (Ser-152) is a Phosphoserine. CBS domains follow at residues 230 to 290, 312 to 370, and 385 to 447; these read PTSS…KSPM, TFKP…MSDM, and IGTY…NLDI. ADP is bound by residues Arg-257, 272–277, Val-317, 338–339, and Lys-357; these read MLTITD and HR. Residues Arg-257, 272-277, Val-317, His-338, 338-339, Lys-357, Thr-387, Ala-392, 413-414, 429-432, Arg-456, His-485, 485-486, and 501-504 contribute to the AMP site; these read MLTITD, HR, SA, SKFD, and SLSD. ATP is bound by residues Arg-257, 272 to 277, Val-317, 338 to 339, Arg-339, and Lys-357; these read MLTITD and HR. The AMPK pseudosubstrate signature appears at 325-346; that stretch reads LLDAVYSLIKNKIHRLPVIDPI. Residues 429-432, Arg-456, and 485-486 contribute to the ADP site; these read SKFD and HR. ATP-binding positions include 429 to 432, Arg-456, and 485 to 486; these read SKFD and HR. Positions 459 to 517 constitute a CBS 4 domain; the sequence is YFEGVVKCNKLEILETIVDRIVRAEVHRLVVANEADSIVGIISLSDILQALILTPAGAK.

Belongs to the 5'-AMP-activated protein kinase gamma subunit family. In terms of assembly, AMPK is a heterotrimer of an alpha catalytic subunit (PRKAA1 or PRKAA2), a beta (PRKAB1 or PRKAB2) and a gamma non-catalytic subunits (PRKAG1, PRKAG2 or PRKAG3). Interacts with FNIP1 and FNIP2. Post-translationally, phosphorylated by ULK1; leading to negatively regulate AMPK activity and suggesting the existence of a regulatory feedback loop between ULK1 and AMPK. Glycosylated; O-GlcNAcylated by OGT, promoting the AMP-activated protein kinase (AMPK) activity.

AMP/ATP-binding subunit of AMP-activated protein kinase (AMPK), an energy sensor protein kinase that plays a key role in regulating cellular energy metabolism. In response to reduction of intracellular ATP levels, AMPK activates energy-producing pathways and inhibits energy-consuming processes: inhibits protein, carbohydrate and lipid biosynthesis, as well as cell growth and proliferation. AMPK acts via direct phosphorylation of metabolic enzymes, and by longer-term effects via phosphorylation of transcription regulators. Also acts as a regulator of cellular polarity by remodeling the actin cytoskeleton; probably by indirectly activating myosin. Gamma non-catalytic subunit mediates binding to AMP, ADP and ATP, leading to activate or inhibit AMPK: AMP-binding results in allosteric activation of alpha catalytic subunit (PRKAA1 or PRKAA2) both by inducing phosphorylation and preventing dephosphorylation of catalytic subunits. ADP also stimulates phosphorylation, without stimulating already phosphorylated catalytic subunit. ATP promotes dephosphorylation of catalytic subunit, rendering the AMPK enzyme inactive. This is 5'-AMP-activated protein kinase subunit gamma-2 (PRKAG2) from Pongo abelii (Sumatran orangutan).